A 246-amino-acid chain; its full sequence is Ubiquinone/menaquinone biosynthesis C-methyltransferase UbiE (246 aa).

S-adenosyl-L-methionine is bound by residues Thr75, Asp95, and 119-120 (DA).

This sequence belongs to the class I-like SAM-binding methyltransferase superfamily. MenG/UbiE family.

It carries out the reaction a 2-demethylmenaquinol + S-adenosyl-L-methionine = a menaquinol + S-adenosyl-L-homocysteine + H(+). It catalyses the reaction a 2-methoxy-6-(all-trans-polyprenyl)benzene-1,4-diol + S-adenosyl-L-methionine = a 5-methoxy-2-methyl-3-(all-trans-polyprenyl)benzene-1,4-diol + S-adenosyl-L-homocysteine + H(+). It participates in quinol/quinone metabolism; menaquinone biosynthesis; menaquinol from 1,4-dihydroxy-2-naphthoate: step 2/2. The protein operates within cofactor biosynthesis; ubiquinone biosynthesis. Its function is as follows. Methyltransferase required for the conversion of demethylmenaquinol (DMKH2) to menaquinol (MKH2) and the conversion of 2-polyprenyl-6-methoxy-1,4-benzoquinol (DDMQH2) to 2-polyprenyl-3-methyl-6-methoxy-1,4-benzoquinol (DMQH2). This Desulfotalea psychrophila (strain LSv54 / DSM 12343) protein is Ubiquinone/menaquinone biosynthesis C-methyltransferase UbiE.